Here is a 469-residue protein sequence, read N- to C-terminus: Uronate isomerase (469 aa).

Belongs to the metallo-dependent hydrolases superfamily. Uronate isomerase family.

The catalysed reaction is D-glucuronate = D-fructuronate. It carries out the reaction aldehydo-D-galacturonate = keto-D-tagaturonate. It participates in carbohydrate metabolism; pentose and glucuronate interconversion. The sequence is that of Uronate isomerase from Pectobacterium carotovorum subsp. carotovorum (strain PC1).